The sequence spans 452 residues: Transcription factor AP-2-delta (452 aa).

Phosphoserine; by PKA is present on serine 239. An H-S-H (helix-span-helix), dimerization region spans residues 280–410 (RRKAANVTLL…VLSEMLNYLE (131 aa)). The tract at residues 416–452 (KNGGAADSGQGHANSEKAPLRKTSEAAVKEGKTEKTD) is disordered. Residues 429 to 452 (NSEKAPLRKTSEAAVKEGKTEKTD) show a composition bias toward basic and acidic residues.

This sequence belongs to the AP-2 family. Binds DNA as a dimer. Can form homodimers or heterodimers with other AP-2 family members. As to expression, highly expressed in brain, placenta, skeletal muscle, thymus, small intestine, and prostate, and expressed at lower levels in leukocyte, spleen, testis, ovary and colon. Barely detectable in heart, kidney, liver, lung or pancreas.

The protein resides in the nucleus. Functionally, sequence-specific DNA-binding protein that interacts with inducible viral and cellular enhancer elements to regulate transcription of selected genes. AP-2 factors bind to the consensus sequence 5'-GCCNNNGGC-3' and activate genes involved in a large spectrum of important biological functions including proper eye, face, body wall, limb and neural tube development. They also suppress a number of genes including MCAM/MUC18, C/EBP alpha and MYC. In Homo sapiens (Human), this protein is Transcription factor AP-2-delta.